The chain runs to 175 residues: Large ribosomal subunit protein uL10 (175 aa).

This sequence belongs to the universal ribosomal protein uL10 family. Part of the ribosomal stalk of the 50S ribosomal subunit. The N-terminus interacts with L11 and the large rRNA to form the base of the stalk. The C-terminus forms an elongated spine to which L12 dimers bind in a sequential fashion forming a multimeric L10(L12)X complex.

Functionally, forms part of the ribosomal stalk, playing a central role in the interaction of the ribosome with GTP-bound translation factors. The chain is Large ribosomal subunit protein uL10 from Prochlorococcus marinus subsp. pastoris (strain CCMP1986 / NIES-2087 / MED4).